Consider the following 580-residue polypeptide: mRNA cap guanine-N(7) methyltransferase (580 aa).

2 stretches are compositionally biased toward polar residues: residues 1 to 17 and 25 to 53; these read MSGS…TSLI and EATS…NSDL. The interval 1–222 is disordered; that stretch reads MSGSKQGSEK…PVEAQPYSRL (222 aa). The segment covering 54–67 has biased composition (basic and acidic residues); it reads KVTENKPKNTEMKP. The segment covering 69-90 has biased composition (polar residues); that stretch reads DPNTNASTTENTPITTSNAQVS. Over residues 102–154 the composition is skewed to basic and acidic residues; the sequence is REPEEAQNRYDRYVPRVDNRRRGEPRVAEVRQDPRYAKYLRQDQEERRIRRPD. Residues 191 to 214 show a composition bias toward acidic residues; it reads ESEENGDEQQGDDEEETPGNEEPV. Residues 271–579 form the mRNA cap 0 methyltransferase domain; the sequence is SPIYKLRNFN…FYLGFAFEKL (309 aa). MRNA is bound at residue 280–281; it reads NN. Positions 284, 308, 330, 376, 406, and 411 each coordinate S-adenosyl-L-methionine.

The protein belongs to the class I-like SAM-binding methyltransferase superfamily. mRNA cap 0 methyltransferase family.

It localises to the nucleus. It carries out the reaction a 5'-end (5'-triphosphoguanosine)-ribonucleoside in mRNA + S-adenosyl-L-methionine = a 5'-end (N(7)-methyl 5'-triphosphoguanosine)-ribonucleoside in mRNA + S-adenosyl-L-homocysteine. Its function is as follows. Responsible for methylating the 5'-cap structure of mRNAs. The polypeptide is mRNA cap guanine-N(7) methyltransferase (ABD1) (Meyerozyma guilliermondii (strain ATCC 6260 / CBS 566 / DSM 6381 / JCM 1539 / NBRC 10279 / NRRL Y-324) (Yeast)).